The sequence spans 329 residues: UDP-N-acetylenolpyruvoylglucosamine reductase (329 aa).

Residues 28-192 (RVGGPADLLC…ARVEVRLHPG (165 aa)) enclose the FAD-binding PCMH-type domain. R172 is a catalytic residue. S221 serves as the catalytic Proton donor. E291 is a catalytic residue. A disordered region spans residues 307–329 (DGHAAAGGGPGAASGGVRPPEAT). Residues 311-320 (AAGGGPGAAS) are compositionally biased toward gly residues.

The protein belongs to the MurB family. FAD is required as a cofactor.

It localises to the cytoplasm. It catalyses the reaction UDP-N-acetyl-alpha-D-muramate + NADP(+) = UDP-N-acetyl-3-O-(1-carboxyvinyl)-alpha-D-glucosamine + NADPH + H(+). The protein operates within cell wall biogenesis; peptidoglycan biosynthesis. In terms of biological role, cell wall formation. The polypeptide is UDP-N-acetylenolpyruvoylglucosamine reductase (Anaeromyxobacter dehalogenans (strain 2CP-1 / ATCC BAA-258)).